The sequence spans 486 residues: Glycogen synthase (486 aa).

An ADP-alpha-D-glucose-binding site is contributed by lysine 15.

Belongs to the glycosyltransferase 1 family. Bacterial/plant glycogen synthase subfamily.

It carries out the reaction [(1-&gt;4)-alpha-D-glucosyl](n) + ADP-alpha-D-glucose = [(1-&gt;4)-alpha-D-glucosyl](n+1) + ADP + H(+). It functions in the pathway glycan biosynthesis; glycogen biosynthesis. Functionally, synthesizes alpha-1,4-glucan chains using ADP-glucose. The protein is Glycogen synthase of Thermotoga petrophila (strain ATCC BAA-488 / DSM 13995 / JCM 10881 / RKU-1).